A 379-amino-acid polypeptide reads, in one-letter code: Arginine biosynthesis bifunctional protein ArgJ (379 aa).

Thr141, Lys163, Thr174, Glu252, Asn374, and Thr379 together coordinate substrate. Thr174 (nucleophile) is an active-site residue.

This sequence belongs to the ArgJ family. As to quaternary structure, heterotetramer of two alpha and two beta chains.

Its subcellular location is the cytoplasm. The enzyme catalyses N(2)-acetyl-L-ornithine + L-glutamate = N-acetyl-L-glutamate + L-ornithine. It catalyses the reaction L-glutamate + acetyl-CoA = N-acetyl-L-glutamate + CoA + H(+). Its pathway is amino-acid biosynthesis; L-arginine biosynthesis; L-ornithine and N-acetyl-L-glutamate from L-glutamate and N(2)-acetyl-L-ornithine (cyclic): step 1/1. It participates in amino-acid biosynthesis; L-arginine biosynthesis; N(2)-acetyl-L-ornithine from L-glutamate: step 1/4. Its function is as follows. Catalyzes two activities which are involved in the cyclic version of arginine biosynthesis: the synthesis of N-acetylglutamate from glutamate and acetyl-CoA as the acetyl donor, and of ornithine by transacetylation between N(2)-acetylornithine and glutamate. In Aquifex aeolicus (strain VF5), this protein is Arginine biosynthesis bifunctional protein ArgJ.